The sequence spans 507 residues: Rhamnogalacturonase A (507 aa).

Residues 1–21 (MYVSRLLLFLAPLLVKGQLSG) form the signal peptide. An intrachain disulfide couples C38 to C64. Residue D215 is the Proton donor of the active site. A disulfide bridge connects residues C217 and C234. N-linked (GlcNAc...) asparagine glycosylation occurs at N235. H290 is a catalytic residue. An N-linked (GlcNAc...) asparagine glycan is attached at N317. 2 disulfides stabilise this stretch: C340-C346 and C368-C377. Residues 462-491 (SPATSSPTATSTAISSVDPVSAATTTATSH) are compositionally biased toward low complexity. A disordered region spans residues 462–507 (SPATSSPTATSTAISSVDPVSAATTTATSHGHGKSHHKHQCRAHRH). Positions 492–507 (GHGKSHHKHQCRAHRH) are enriched in basic residues.

Belongs to the glycosyl hydrolase 28 family.

It is found in the secreted. It carries out the reaction Endohydrolysis of alpha-D-GalA-(1-&gt;2)-alpha-L-Rha glycosidic bond in the rhamnogalacturonan I backbone with initial inversion of anomeric configuration releasing oligosaccharides with beta-D-GalA at the reducing end.. In terms of biological role, pectinolytic enzymes consist of four classes of enzymes: pectine lyase, polygalacturonase, pectin methylesterase and rhamnogalacturonase. Hydrolyzes alpha-D-galacturonopyranosyl-(1,2)-alpha-L-rhamnopyranosyl linkages in the backbone of the hairy regions of pectins. Active against linseed rhamnogalacturonan. The protein is Rhamnogalacturonase A (rhgA) of Emericella nidulans (strain FGSC A4 / ATCC 38163 / CBS 112.46 / NRRL 194 / M139) (Aspergillus nidulans).